A 404-amino-acid chain; its full sequence is Caspase-1 (404 aa).

Positions 1–91 (MADKVLKDKR…HLAQTLGLSS (91 aa)) constitute a CARD domain. Residues 1–119 (MADKVLKDKR…SLPAFVENMP (119 aa)) constitute a propeptide that is removed on maturation. Residues histidine 237 and cysteine 285 contribute to the active site. A propeptide spanning residues 298–316 (SPKASTDSWTHQPLMLQSD) is cleaved from the precursor. A Phosphoserine modification is found at serine 302.

Belongs to the peptidase C14A family. In terms of assembly, heterotetramer that consists of two anti-parallel arranged heterodimers, each one formed by a 20 kDa (Caspase-1 subunit p20) and a 10 kDa (Caspase-1 subunit p10) subunit. May be a component of the inflammasome, a protein complex which also includes PYCARD, CARD8 and NLRP2 and whose function would be the activation of pro-inflammatory caspases. Component of the AIM2 PANoptosome complex, a multiprotein complex that drives inflammatory cell death (PANoptosis). Both the p10 and p20 subunits interact with MEFV. Interacts with CARD17P/INCA and CARD18. Interacts with SERPINB1; this interaction regulates CASP1 activity. As to quaternary structure, heterotetramer that consists of two anti-parallel arranged heterodimers, each one formed by a 20 kDa (Caspase-1 subunit p20) and a 10 kDa (Caspase-1 subunit p10) subunit. In terms of processing, the two subunits are derived from the precursor sequence by an autocatalytic mechanism. Post-translationally, ubiquitinated via 'Lys-11'-linked polyubiquitination. Deubiquitinated by USP8.

Its subcellular location is the cytoplasm. It is found in the cell membrane. The catalysed reaction is Strict requirement for an Asp residue at position P1 and has a preferred cleavage sequence of Tyr-Val-Ala-Asp-|-.. Functionally, thiol protease involved in a variety of inflammatory processes by proteolytically cleaving other proteins, such as the precursors of the inflammatory cytokines interleukin-1 beta (IL1B) and interleukin 18 (IL18) as well as the pyroptosis inducer Gasdermin-D (GSDMD), into active mature peptides. Plays a key role in cell immunity as an inflammatory response initiator: once activated through formation of an inflammasome complex, it initiates a pro-inflammatory response through the cleavage of the two inflammatory cytokines IL1B and IL18, releasing the mature cytokines which are involved in a variety of inflammatory processes. Cleaves a tetrapeptide after an Asp residue at position P1. Also initiates pyroptosis, a programmed lytic cell death pathway, through cleavage of GSDMD. In contrast to cleavage of interleukin IL1B, recognition and cleavage of GSDMD is not strictly dependent on the consensus cleavage site but depends on an exosite interface on CASP1 that recognizes and binds the Gasdermin-D, C-terminal (GSDMD-CT) part. Cleaves and activates CASP7 in response to bacterial infection, promoting plasma membrane repair. Upon inflammasome activation, during DNA virus infection but not RNA virus challenge, controls antiviral immunity through the cleavage of CGAS, rendering it inactive. In apoptotic cells, cleaves SPHK2 which is released from cells and remains enzymatically active extracellularly. This is Caspase-1 (CASP1) from Canis lupus familiaris (Dog).